Reading from the N-terminus, the 355-residue chain is 3-dehydroquinate synthase (355 aa).

Residues 71-76, 105-109, 129-130, Lys142, and Lys151 each bind NAD(+); these read EGEERK, GVVGD, and TS. Zn(2+)-binding residues include Glu184, His246, and His263.

It belongs to the sugar phosphate cyclases superfamily. Dehydroquinate synthase family. The cofactor is Co(2+). Zn(2+) is required as a cofactor. Requires NAD(+) as cofactor.

Its subcellular location is the cytoplasm. It carries out the reaction 7-phospho-2-dehydro-3-deoxy-D-arabino-heptonate = 3-dehydroquinate + phosphate. It functions in the pathway metabolic intermediate biosynthesis; chorismate biosynthesis; chorismate from D-erythrose 4-phosphate and phosphoenolpyruvate: step 2/7. In terms of biological role, catalyzes the conversion of 3-deoxy-D-arabino-heptulosonate 7-phosphate (DAHP) to dehydroquinate (DHQ). This is 3-dehydroquinate synthase from Streptococcus pneumoniae (strain Hungary19A-6).